A 929-amino-acid chain; its full sequence is Band 3 anion transport protein (929 aa).

Met-1 is subject to N-acetylmethionine. Residues 1-422 (MGDMRDHEEV…LSDITDALSP (422 aa)) lie on the Cytoplasmic side of the membrane. The residue at position 18 (Ser-18) is a Phosphoserine. Tyr-31 and Tyr-56 each carry phosphotyrosine. Positions 46–67 (ALPTEQTATDYVPSSTSTPHPS) are disordered. Over residues 58–67 (PSSTSTPHPS) the composition is skewed to low complexity. Positions 69-303 (GQVYVELQEL…LGRAAATLMT (235 aa)) are globular. The interaction with ANK1 stretch occupies residues 190-199 (AVLTRSGGAS). Residues Ser-199, Ser-222, and Ser-363 each carry the phosphoserine modification. Residues 317–370 (REELLRSLESFLDCSLVLPPTDAPSEKALLNLVPVQKELLRRRYLPSPAKPDPN) are dimerization arm. Residues 366–389 (KPDPNLYNTLDLNGGKGGPGDEDD) are disordered. Tyr-372 bears the Phosphotyrosine mark. Thr-374 carries the post-translational modification Phosphothreonine. Residues 423 to 446 (QVLAAVIFIYFAALSPAVTFGGLL) form a helical membrane-spanning segment. At 447–454 (GEKTRNLM) the chain is on the extracellular side. Residues 455 to 475 (GVSELLISTAVQGILFALLGA) traverse the membrane as a helical segment. Topologically, residues 476–478 (QPL) are cytoplasmic. A discontinuously helical membrane pass occupies residues 479–495 (LVLGFSGPLLVFEEAFF). Over 496-504 (SFCESNNLE) the chain is Extracellular. Residues 505-525 (YIVGRAWIGFWLILLVMLVVA) form a helical membrane-spanning segment. Over 526-537 (FEGSFLVQYISR) the chain is Cytoplasmic. Residues 538-560 (YTQEIFSFLISLIFIYETFSKLI) form a helical membrane-spanning segment. Over 561–588 (KIFQDYPLQQTYAPVVMKPKPQGPVPNT) the chain is Extracellular. A helical membrane pass occupies residues 589–609 (ALFSLVLMAGTFLLAMTLRKF). Residues 610–620 (KNSTYFPGKLR) lie on the Cytoplasmic side of the membrane. The helical transmembrane segment at 621 to 641 (RVIGDFGVPISILIMVLVDSF) threads the bilayer. The Extracellular portion of the chain corresponds to 642–681 (IKGTYTQKLSVPDGLKVSNSSARGWVIHPLGLYRLFPTWM). N-linked (GlcNAc...) asparagine glycosylation occurs at Asn-660. A helical membrane pass occupies residues 682 to 702 (MFASVLPALLVFILIFLESQI). The Cytoplasmic segment spans residues 703–718 (TTLIVSKPERKMIKGS). Residues 719-737 (GFHLDLLLVVGMGGVAALF) traverse the membrane as a helical segment. The chain crosses the membrane as a discontinuously helical span at residues 738–755 (GMPWLSATTVRSVTHANA). Over 756–778 (LTVMGKASGPGAAAQIQEVKEQR) the chain is Cytoplasmic. 2 helical membrane passes run 779–799 (ISGLLVSVLVGLSILMEPILS) and 800–818 (RIPLAVLFGIFLYMGVTSL). The Cytoplasmic portion of the chain corresponds to 819 to 856 (SGIQLFDRILLLFKPPKYHPDVPFVKRVKTWRMHLFTG). Residues 857-887 (IQIICLAVLWVVKSTPASLALPFVLILTVPL) constitute an intramembrane region (discontinuously helical). Cys-861 is lipidated: S-palmitoyl cysteine. Residues 888–929 (RRLILPLIFRELELQCLDGDDAKVTFDEENGLDEYDEVPMPV) are Cytoplasmic-facing. Tyr-922 is modified (phosphotyrosine).

This sequence belongs to the anion exchanger (TC 2.A.31) family. A dimer in solution, but in its membrane environment, it exists primarily as a mixture of dimers and tetramers and spans the membrane asymmetrically. Component of the ankyrin-1 complex in the erythrocyte, composed of ANK1, RHCE, RHAG, SLC4A1, EPB42, GYPA, GYPB and AQP1. Interacts with STOM; this interaction positively regulates SLC4A1 activity. Interacts with GYPA; a GYPA monomer is bound at each end of the SLC4A1 dimer forming a heterotetramer. Three SLC4A1 dimers (Band 3-I, Band 3-II and Band 3-III) participates in the ankyrin-1 complex. Interacts (via the cytoplasmic domain) with EPB42; this interaction is mediated by the SLC4A1 Band 3-I dimer. Interacts (via the cytoplasmic domain) directly with ANK1; this interaction is mediated by the SLC4A1 Band 3-II and Band 3-III dimers. As to quaternary structure, interacts with TMEM139. In terms of tissue distribution, detected in erythrocytes (at protein level).

The protein localises to the cell membrane. It is found in the basolateral cell membrane. It carries out the reaction hydrogencarbonate(in) + chloride(out) = hydrogencarbonate(out) + chloride(in). Functionally, functions both as a transporter that mediates electroneutral anion exchange across the cell membrane and as a structural protein. Component of the ankyrin-1 complex of the erythrocyte membrane; required for normal flexibility and stability of the erythrocyte membrane and for normal erythrocyte shape via the interactions of its cytoplasmic domain with cytoskeletal proteins, glycolytic enzymes, and hemoglobin. Functions as a transporter that mediates the 1:1 exchange of inorganic anions across the erythrocyte membrane. Mediates chloride-bicarbonate exchange in the kidney, and is required for normal acidification of the urine. The protein is Band 3 anion transport protein of Mus musculus (Mouse).